Consider the following 93-residue polypeptide: MTPNCAKELVTLSAAHKSFKDYKPQNNYDSIVYSDFKEVEELYGEAQSRRMEHLAKQALLDISTHEPVENAVTLTRITIGALKGDETAKAQLR.

This is an uncharacterized protein from Pasteurella multocida (strain Pm70).